A 229-amino-acid chain; its full sequence is MFGTIFNTVMIIAGSIIGGIFKKGIKDEYQDILMQAMGFAAVALGINAITQHLPDSKYPILFIVSLAIGGLLGQIINLELRFNKLVNKFSKSNLAEGLSTAVLLFCIGSLSILGPVEAALHGDYTYLLTNGMLDGITSIVLASTFGFGIAAAALVLFSWQGSIYLFAQVMESAINTDLINEITIVGGILILSSGLSILGIKKFKTLNLLPSLLIPPVVIFVIHAFGLRF.

7 helical membrane-spanning segments follow: residues 1–21, 32–52, 58–78, 100–120, 139–159, 178–198, and 206–226; these read MFGT…GGIF, ILMQ…ITQH, YPIL…IINL, TAVL…EAAL, IVLA…LFSW, LINE…LSIL, and LNLL…HAFG.

Its subcellular location is the cell membrane. This is an uncharacterized protein from Bacillus subtilis (strain 168).